A 677-amino-acid polypeptide reads, in one-letter code: mRNA export factor Gle1 (677 aa).

A compositionally biased stretch (basic and acidic residues) spans 34-48; that stretch reads EDREPIWVEGSRKTP. Disordered regions lie at residues 34 to 65, 113 to 136, and 294 to 366; these read EDRE…NNEI, KQDA…DQLQ, and ERQR…ATST. Over residues 49–60 the composition is skewed to pro residues; the sequence is EPPLPEESPAPE. 2 coiled-coil regions span residues 122-179 and 280-346; these read ETQQ…QKLH and QQQL…AANV. The segment covering 294 to 340 has biased composition (basic and acidic residues); that stretch reads ERQRQQQQEEERQKLEEQQKLEEQEKLRKEKEESAAKEKQQEAETAK.

Belongs to the GLE1 family. As to quaternary structure, may associate with the NPC.

The protein resides in the cytoplasm. The protein localises to the nucleus. It is found in the nuclear pore complex. Functionally, required for the export of mRNAs containing poly(A) tails from the nucleus into the cytoplasm. May be involved in the terminal step of the mRNA transport through the nuclear pore complex (NPC). This chain is mRNA export factor Gle1, found in Drosophila melanogaster (Fruit fly).